We begin with the raw amino-acid sequence, 199 residues long: Molybdenum cofactor guanylyltransferase (199 aa).

GTP-binding positions include 12-14 (LAG), Lys25, Asn53, Asp71, and Asp101. Asp101 contributes to the Mg(2+) binding site.

It belongs to the MobA family. In terms of assembly, monomer. The cofactor is Mg(2+).

The protein localises to the cytoplasm. The enzyme catalyses Mo-molybdopterin + GTP + H(+) = Mo-molybdopterin guanine dinucleotide + diphosphate. Functionally, transfers a GMP moiety from GTP to Mo-molybdopterin (Mo-MPT) cofactor (Moco or molybdenum cofactor) to form Mo-molybdopterin guanine dinucleotide (Mo-MGD) cofactor. The sequence is that of Molybdenum cofactor guanylyltransferase from Cupriavidus necator (strain ATCC 17699 / DSM 428 / KCTC 22496 / NCIMB 10442 / H16 / Stanier 337) (Ralstonia eutropha).